We begin with the raw amino-acid sequence, 404 residues long: Lissencephaly-1 homolog (404 aa).

A LisH domain is found at 7 to 39 (QKEEINRAIAEYMQNNGYSESFSVFLKESSLSE). A coiled-coil region spans residues 54-81 (TTVLRLQRKVNDLESKLQESQREINHGA). Residues 69–89 (KLQESQREINHGAPTRDKRQA) show a composition bias toward basic and acidic residues. Positions 69 to 90 (KLQESQREINHGAPTRDKRQAA) are disordered. WD repeat units lie at residues 104–145 (GHRL…RTLK), 146–185 (GHTD…DCLK), 189–228 (GHEH…CVYT), 231–270 (GHND…AKLV), 273–327 (DHEH…VLFT), 330–369 (AHEN…CMKA), and 372–404 (AHEH…WECR).

The protein belongs to the WD repeat LIS1/nudF family. In terms of assembly, component of a dynein-regulating complex composed of at least lis-1 and nud-2. Interacts with nud-2; the interaction is direct. As to expression, expressed in all classes of neurons in the ventral cord. Expressed in the multinucleate spermathecal valves and adult seam cells.

It localises to the cytoplasm. The protein localises to the cytoskeleton. The protein resides in the microtubule organizing center. It is found in the centrosome. Its subcellular location is the chromosome. It localises to the centromere. The protein localises to the kinetochore. The protein resides in the nucleus envelope. Its function is as follows. Positively regulates the activity of the minus-end directed microtubule motor protein dynein. May enhance dynein-mediated microtubule sliding by targeting dynein to the microtubule plus end. Required for several dynein- and microtubule-dependent processes such as nuclear migration during cell division. Part of a complex with nud-2, which is recruited to the nuclear envelope by unc-83, where, in turn, it recruits dynein to the nuclear surface and regulates nuclear migration in hypodermal precursor cells. Plays a role in GABAergic synaptic vesicle localization in the ventral nerve cord. Required for neuronal cell differentiation. The sequence is that of Lissencephaly-1 homolog from Caenorhabditis elegans.